A 901-amino-acid chain; its full sequence is Disease resistance RPP8-like protein 3 (901 aa).

Residues 15–56 adopt a coiled-coil conformation; it reads ALLNRESERLNGIDEQVDGLKRQLRGLQSLLKDADAKKHGSD. The region spanning 144-453 is the NB-ARC domain; the sequence is LQDIQREIRQ…AEGIYDGLTI (310 aa). Residues 190 to 197 and 385 to 392 contribute to the ATP site; these read GMGGIGKT and GAQIVGKS. LRR repeat units lie at residues 567 to 591, 592 to 615, and 833 to 858; these read LPLLRVLDLSSVKFEGGKLPSSIGG, LIHLRFLSLHQAVVSHLPSTIRNL, and MPCLRDLIIHSCEKLEELPDGLKYVT.

It belongs to the disease resistance NB-LRR family. RPP8/HRT subfamily.

In terms of biological role, disease resistance protein. In Arabidopsis thaliana (Mouse-ear cress), this protein is Disease resistance RPP8-like protein 3 (RPP8L3).